The chain runs to 441 residues: Cysteine--tRNA ligase (441 aa).

Position 24 (Cys-24) interacts with Zn(2+). A 'HIGH' region motif is present at residues 26 to 36 (PTVYNYIHIGN). Residues Cys-204, His-230, and Glu-234 each contribute to the Zn(2+) site. The 'KMSKS' region signature appears at 262–266 (KMSKS). Lys-265 is an ATP binding site.

This sequence belongs to the class-I aminoacyl-tRNA synthetase family. Monomer. Zn(2+) is required as a cofactor.

It localises to the cytoplasm. It carries out the reaction tRNA(Cys) + L-cysteine + ATP = L-cysteinyl-tRNA(Cys) + AMP + diphosphate. The protein is Cysteine--tRNA ligase of Mycoplasma capricolum subsp. capricolum (strain California kid / ATCC 27343 / NCTC 10154).